Consider the following 581-residue polypeptide: Guanine nucleotide-binding protein-like 3 homolog (581 aa).

Positions Met1–Lys49 are enriched in basic residues. A disordered region spans residues Met1–Leu50. Residues Leu64–Ser108 are a coiled coil. Ser99 is modified (phosphoserine). The 185-residue stretch at Phe141 to Thr325 folds into the CP-type G domain. Residues Asn189–Asp192, Gly274–Ser281, and Asp318–Gly321 contribute to the GTP site. Residues Lys500 to Asp517 are compositionally biased toward basic and acidic residues. The disordered stretch occupies residues Lys500 to Ser519.

This sequence belongs to the TRAFAC class YlqF/YawG GTPase family.

It is found in the nucleus. Its subcellular location is the nucleolus. Its function is as follows. May play a role in regulating cellular proliferation. This is Guanine nucleotide-binding protein-like 3 homolog (Ns1) from Drosophila melanogaster (Fruit fly).